We begin with the raw amino-acid sequence, 1959 residues long: Zinc finger protein hangover (1959 aa).

Positions 79 to 155 (NCCRLCIAPQ…FSSQAKQRQW (77 aa)) constitute a ZAD domain. Residues cysteine 81, cysteine 84, cysteine 128, and cysteine 131 each coordinate Zn(2+). The tract at residues 178–208 (GFFDQHLHQQQQHHQHLENELEAEKEKATPT) is disordered. Basic and acidic residues predominate over residues 192 to 205 (QHLENELEAEKEKA). Phosphoserine is present on serine 228. The residue at position 246 (threonine 246) is a Phosphothreonine. The C2H2-type 1 zinc finger occupies 318–341 (ASCRACSLQFSTRANARRHERNLH). The C2H2-type 2; degenerate zinc finger occupies 447–469 (MTCRCCNKYFSTYKNFMAHVRKK). The segment at 581 to 604 (YECKLCPKGFRTKHEFRTHVYDKH) adopts a C2H2-type 3 zinc-finger fold. Residues 674–762 (AVSDNASTTG…ANRDASAPKS (89 aa)) are disordered. A compositionally biased stretch (polar residues) spans 677–693 (DNASTTGSGMARSNSME). Position 680 is a phosphoserine (serine 680). Low complexity-rich tracts occupy residues 716–727 (SSSAAPPLTSTP) and 741–759 (TSAS…DASA). 2 consecutive C2H2-type zinc fingers follow at residues 770 to 793 (QVCP…ESKH) and 801 to 824 (YKCV…INVH). A phosphoserine mark is found at serine 832, serine 894, serine 895, serine 898, and serine 899. A C2H2-type 6 zinc finger spans residues 908 to 930 (KECPICNAVFSNNIGLSNHMRSH). Residues 960–991 (TDSELGVGGTMSESAPATPANVPPAMANQTPQ) are disordered. 5 C2H2-type zinc fingers span residues 1011–1034 (MRCR…LTDH), 1042–1065 (IKCK…FKVH), 1078–1101 (FECD…RSVH), 1154–1176 (YQCK…INSH), and 1184–1207 (YSCK…YKKH). Residues 1233–1253 (TPTCNRKPITSTGAHQQQDGQ) show a composition bias toward polar residues. The interval 1233-1301 (TPTCNRKPIT…GNGTTVGVAS (69 aa)) is disordered. Residues 1255-1267 (HSHHTAKRTIFRH) are compositionally biased toward basic residues. The segment covering 1271-1283 (DDDDEEDDDEQQQ) has biased composition (acidic residues). C2H2-type zinc fingers lie at residues 1318 to 1340 (VACT…IQKH) and 1375 to 1397 (YACD…RKWH). Low complexity predominate over residues 1445 to 1467 (QQSLNNSCNSSMNHNNNSSSNRS). Residues 1445–1471 (QQSLNNSCNSSMNHNNNSSSNRSKSMK) are disordered. 2 consecutive C2H2-type zinc fingers follow at residues 1476–1499 (LKCE…YELH) and 1552–1574 (WGCD…INNH). The interval 1627–1865 (AAGATTTDKL…STGERRKKAV (239 aa)) is disordered. Acidic residues predominate over residues 1639–1695 (PDEEDSDDLDEDSSGDDDDSSGTGDDDDDDDSDDDEDGEGEDEDEEGDGGEGEDEEG). The segment covering 1697-1715 (QPPAQLLPQQQHKTDLNLN) has biased composition (low complexity). Composition is skewed to acidic residues over residues 1716–1758 (QDDD…EEPE) and 1782–1829 (SDDE…EDEP). A compositionally biased stretch (low complexity) spans 1833 to 1851 (STASFSESESSTTTTSNSH). The C2H2-type 16 zinc finger occupies 1873 to 1895 (FTCDLCQLCFDSQELLQSHIKSH). Residues 1933 to 1959 (PDSKSAVLANNNNSKTSSKTVAAGATN) are disordered. A compositionally biased stretch (low complexity) spans 1942–1952 (NNNNSKTSSKT).

As to expression, expressed ubiquitously in the nervous system, in neurons not glia.

It is found in the nucleus. Functionally, required for normal development of ethanol tolerance. Relies on two distinct molecular pathways: a cellular stress pathway defined by hang, and a parallel pathway requiring octopamine. The sequence is that of Zinc finger protein hangover (hang) from Drosophila melanogaster (Fruit fly).